A 209-amino-acid chain; its full sequence is Ribosomal RNA large subunit methyltransferase E (209 aa).

Positions 63, 65, 83, 99, and 124 each coordinate S-adenosyl-L-methionine. Lysine 164 acts as the Proton acceptor in catalysis.

Belongs to the class I-like SAM-binding methyltransferase superfamily. RNA methyltransferase RlmE family.

The protein localises to the cytoplasm. It catalyses the reaction uridine(2552) in 23S rRNA + S-adenosyl-L-methionine = 2'-O-methyluridine(2552) in 23S rRNA + S-adenosyl-L-homocysteine + H(+). Specifically methylates the uridine in position 2552 of 23S rRNA at the 2'-O position of the ribose in the fully assembled 50S ribosomal subunit. In Aeromonas salmonicida (strain A449), this protein is Ribosomal RNA large subunit methyltransferase E.